Reading from the N-terminus, the 241-residue chain is Tetraspanin-1 (241 aa).

Over 1-11 the chain is Cytoplasmic; the sequence is MQCFSFIKTMM. A helical transmembrane segment spans residues 12-34; the sequence is ILFNLLIFLCGAALLAVGIWVSI. Topologically, residues 35 to 53 are extracellular; it reads DGASFLKIFGPLSSSAMQF. The helical transmembrane segment at 54–76 threads the bilayer; it reads VNVGYFLIAAGVVVFALGFLGCY. Residues 77–88 lie on the Cytoplasmic side of the membrane; that stretch reads GAKTESKCALMT. Residues 89-111 form a helical membrane-spanning segment; the sequence is FFFILLLIFIAEVAAAVVALVYT. Residues 112–214 lie on the Extracellular side of the membrane; the sequence is TMAEHFLTLL…LYDIRTNAVT (103 aa). Residues Asn141, Asn154, Asn178, and Asn184 are each glycosylated (N-linked (GlcNAc...) asparagine). Residues 215-237 form a helical membrane-spanning segment; that stretch reads VGGVAAGIGGLELAAMIVSMYLY. The Cytoplasmic segment spans residues 238–241; that stretch reads CNLQ.

It belongs to the tetraspanin (TM4SF) family. Interacts with SLC19A2. Interacts with NTRK1/TRKA.

The protein localises to the lysosome membrane. Functionally, structural component of specialized membrane microdomains known as tetraspanin-enriched microdomains (TERMs), which act as platforms for receptor clustering and signaling. Participates thereby in diverse biological functions such as cell signal transduction, adhesion, migration and protein trafficking. Regulates neuronal differentiation in response to NGF by facilitating NGF-mediated activation of NTRK1/TRKA receptor tyrosine kinase and subsequent downstream signaling pathways. Plays a role in the inhibition of TNFalpha-induced apoptosis. Mechanistically, inhibits the NF-kappa-B signaling pathway by blocking phosphorylation of CHUK. Also promotes the stability of the thiamine transporter 1/SLC19A2 in intestinal epithelial cells leading to an increase of thiamine uptake process. The polypeptide is Tetraspanin-1 (TSPAN1) (Pongo abelii (Sumatran orangutan)).